A 407-amino-acid chain; its full sequence is Peptidase T (407 aa).

His-82 contacts Zn(2+). The active site involves Asp-84. Zn(2+) is bound at residue Asp-143. Catalysis depends on Glu-177, which acts as the Proton acceptor. Residues Glu-178, Asp-200, and His-382 each contribute to the Zn(2+) site.

It belongs to the peptidase M20B family. Zn(2+) is required as a cofactor.

The protein resides in the cytoplasm. The enzyme catalyses Release of the N-terminal residue from a tripeptide.. In terms of biological role, cleaves the N-terminal amino acid of tripeptides. This is Peptidase T from Streptococcus pyogenes serotype M18 (strain MGAS8232).